The chain runs to 321 residues: MTSKLDQLREITTVVADTGDIEAVARLKPVDCTTNPSIVLKALGTPMFADAIKEAVAWGKTQGGNPEAVSSAVADRLAISVGAALVKLVPGRVSTEVDADLSFDTEASLAKARSIIAAYKDRGIERDRILIKLASTWEGIRAAEVLQKEGIDCNLTLLFSKAQAIACADAKVFLISPFVGRILDWYKKSTGKDYTAEEDPGVISVRDIYNYYKANDIKTIVMGASFRNAGEIEALAGCDRLTISPALLDELAKDEGKLERKLSPESRKPDAKVSVDEKTFRWMMNEDAMATEKLAEGIRAFAKDLTTLRTMVQKELQLAAA.

Catalysis depends on K132, which acts as the Schiff-base intermediate with substrate.

This sequence belongs to the transaldolase family. Type 1 subfamily. In terms of assembly, homodimer.

It is found in the cytoplasm. The enzyme catalyses D-sedoheptulose 7-phosphate + D-glyceraldehyde 3-phosphate = D-erythrose 4-phosphate + beta-D-fructose 6-phosphate. The protein operates within carbohydrate degradation; pentose phosphate pathway; D-glyceraldehyde 3-phosphate and beta-D-fructose 6-phosphate from D-ribose 5-phosphate and D-xylulose 5-phosphate (non-oxidative stage): step 2/3. Functionally, transaldolase is important for the balance of metabolites in the pentose-phosphate pathway. This is Transaldolase from Rhizobium etli (strain CIAT 652).